We begin with the raw amino-acid sequence, 393 residues long: Xyloside xylosyltransferase 1 (393 aa).

The Cytoplasmic segment spans residues 1-23; it reads MGLLRGGLPCARAMARLGAVRSH. The chain crosses the membrane as a helical; Signal-anchor for type II membrane protein span at residues 24-44; sequence YCALLLAAALAVCAFYYLGSG. Over 45 to 393 the chain is Lumenal; that stretch reads RETFSSATKR…GNCNTPIPED (349 aa). Residue 104 to 106 participates in UDP-alpha-D-xylose binding; it reads MFT. Position 226 (D226) interacts with Mn(2+). L227 lines the UDP-alpha-D-xylose pocket. Residue D228 participates in Mn(2+) binding. Residues 263 to 266 form an interaction with target proteins region; the sequence is HTFW. S290, L328, and Q331 together coordinate UDP-alpha-D-xylose. Residues Q331 and W360 each contribute to the a glycoprotein site. 2 disulfide bridges follow: C350–C375 and C357–C386. Position 383 (H383) interacts with Mn(2+). N385 is a binding site for a glycoprotein.

This sequence belongs to the glycosyltransferase 8 family. In terms of assembly, homodimer. Dimer formation may be essential for the retention in endoplasmic reticulum. Mg(2+) serves as cofactor. Requires Mn(2+) as cofactor.

It localises to the endoplasmic reticulum membrane. The catalysed reaction is 3-O-[alpha-D-xylosyl-(1-&gt;3)-beta-D-glucosyl]-L-seryl-[EGF-like domain protein] + UDP-alpha-D-xylose = 3-O-[alpha-D-xylosyl-(1-&gt;3)-alpha-D-xylosyl-(1-&gt;3)-beta-D-glucosyl]-L-seryl-[EGF-like domain protein] + UDP + H(+). Functionally, alpha-1,3-xylosyltransferase, which elongates the O-linked xylose-glucose disaccharide attached to EGF-like repeats in the extracellular domain of target proteins by catalyzing the addition of the second xylose. Known targets include Notch proteins and coagulation factors, such as F9. The polypeptide is Xyloside xylosyltransferase 1 (XXYLT1) (Homo sapiens (Human)).